The chain runs to 496 residues: MRKCFFMSHNPEEKQSNLDSNHKNESSSNKRIKFKTWQFILLLLGVVIITAGITVAATIGISHKISGLTKDERQEIKKIEYAYKTLNNDYYKKQNAGKLSEAAIDGMVKELKDPYSEYMTKDETKSFNEDVSGDFVGIGAEMQKKDKQIMITSPMKDSPAEKAGIQPKDVVTKVDGKSVVGKPLDQVVKLVRGKEGTTVKLTIKRGSQEKEIKIKRGKIHVKSVEYKKKDNIGVFTINKFQDNTAGELKSAIIKAHKDGVRSIVLDLRNNPGGLLDEAVKMANIFIDKDQTVVKLEKGDDTESIKTSNDASNEAKDMKVSILVNEGSASASEVFTGAMRDHKKAKVYGSKTFGKGIVQTTREFKDGSLLKYTQMKWLTPDGHNIHGKGIQPDTKIASPQYQSISVIPTDKSYSVGDNTKYVKSIKIGLDALGYNVNNDSKQFDTQLESAIKKFQSEHELSVNGKFDKKTNEKFTQLLVEKANKEDKVLDELINKLK.

Positions 1 to 26 (MRKCFFMSHNPEEKQSNLDSNHKNES) are disordered. Positions 10–25 (NPEEKQSNLDSNHKNE) are enriched in basic and acidic residues. The helical transmembrane segment at 39 to 59 (FILLLLGVVIITAGITVAATI) threads the bilayer. One can recognise a PDZ domain in the interval 124–206 (TKSFNEDVSG…TTVKLTIKRG (83 aa)). Catalysis depends on charge relay system residues Ser-329, Asp-340, and Lys-354.

This sequence belongs to the peptidase S41A family.

The protein resides in the cell membrane. The sequence is that of Probable CtpA-like serine protease from Staphylococcus haemolyticus (strain JCSC1435).